The sequence spans 232 residues: uncharacterized protein (232 aa).

Residues 119–145 (DEEYRENSKAPEAKARPSFVGEGRRLG) are disordered. The span at 123-133 (RENSKAPEAKA) shows a compositional bias: basic and acidic residues.

This is an uncharacterized protein from Encephalitozoon cuniculi (strain GB-M1) (Microsporidian parasite).